Consider the following 119-residue polypeptide: Putative arsenical resistance operon repressor ArsR2 (119 aa).

Positions 24 to 119 (VDSDAMATDL…TLDDLRGNHE (96 aa)) constitute an HTH arsR-type domain. Positions 60 to 83 (VCDLEATVGVSQSAVSQALSRLYT) form a DNA-binding region, H-T-H motif.

Functionally, transcriptional repressor for the arsR2M operon. The protein is Putative arsenical resistance operon repressor ArsR2 (arsR2) of Halobacterium salinarum (strain ATCC 700922 / JCM 11081 / NRC-1) (Halobacterium halobium).